The chain runs to 289 residues: Early E4 34 kDa protein (289 aa).

The protein belongs to the adenoviridae E4 30 to 34 kDa protein family. Interacts with E1B-55k.

The protein localises to the host nucleus. The protein resides in the host cytoplasm. Functionally, plays a major role to prevent cellular inhibition of viral genome replication by nuclear bodies. Assembles an SCF-like E3 ubiquitin ligase complex based on the cellular proteins ELOB, ELOC, CUL5 and RBX1, in cooperation with viral E1B-55K. This viral RING-type ligase ubiquitinates cellular substrates prior to proteasomal degradation: p53/TP53, LIG4, MRE11-RAD50-NBS1 (MRN) complex, ITGA3, DAXX and BLM. This chain is Early E4 34 kDa protein, found in Human adenovirus F serotype 40 (HAdV-40).